The primary structure comprises 424 residues: Histidinol dehydrogenase homolog (424 aa).

Zn(2+) is bound by residues Gln250 and His253. Catalysis depends on proton acceptor residues Glu318 and His319. Residues Asp352 and His411 each contribute to the Zn(2+) site.

This sequence belongs to the histidinol dehydrogenase family. The cofactor is Zn(2+).

The chain is Histidinol dehydrogenase homolog from Shouchella clausii (strain KSM-K16) (Alkalihalobacillus clausii).